A 253-amino-acid polypeptide reads, in one-letter code: Major prion protein (253 aa).

A signal peptide spans 1–22; that stretch reads MANLGCWMLVLFVATWSDLGLC. The tract at residues 23 to 230 is interaction with GRB2, ERI3 and SYN1; the sequence is KKRPKPGGWN…ESQAYYQRGS (208 aa). Residues 26 to 108 are disordered; the sequence is PKPGGWNTGG…WHKPSKPKTS (83 aa). 5 tandem repeats follow at residues 51–59, 60–67, 68–75, 76–83, and 84–91. The interval 51 to 91 is 5 X 8 AA tandem repeats of P-H-G-G-G-W-G-Q; it reads PQGGGGWGQPHGGGWGQPHGGGWGQPHGGGWGQPHGGGWGQ. The span at 52–95 shows a compositional bias: gly residues; that stretch reads QGGGGWGQPHGGGWGQPHGGGWGQPHGGGWGQPHGGGWGQGGGT. 12 residues coordinate Cu(2+): H61, G62, G63, H69, G70, G71, H77, G78, G79, H85, G86, and G87. Basic residues predominate over residues 98-108; that stretch reads QWHKPSKPKTS. Cysteines 179 and 214 form a disulfide. N-linked (GlcNAc...) asparagine glycosylation is found at N181 and N197. S230 carries the GPI-anchor amidated serine lipid modification. Positions 231–253 are cleaved as a propeptide — removed in mature form; that stretch reads SMVLFSSPPVILLISFLIFLIVG.

It belongs to the prion family. Monomer and homodimer. Has a tendency to aggregate into amyloid fibrils containing a cross-beta spine, formed by a steric zipper of superposed beta-strands. Soluble oligomers may represent an intermediate stage on the path to fibril formation. Copper binding may promote oligomerization. Interacts with GRB2, APP, ERI3/PRNPIP and SYN1. Mislocalized cytosolically exposed PrP interacts with MGRN1; this interaction alters MGRN1 subcellular location and causes lysosomal enlargement. Interacts with KIAA1191.

The protein localises to the cell membrane. It is found in the golgi apparatus. Its function is as follows. Its primary physiological function is unclear. Has cytoprotective activity against internal or environmental stresses. May play a role in neuronal development and synaptic plasticity. May be required for neuronal myelin sheath maintenance. May play a role in iron uptake and iron homeostasis. Soluble oligomers are toxic to cultured neuroblastoma cells and induce apoptosis (in vitro). Association with GPC1 (via its heparan sulfate chains) targets PRNP to lipid rafts. Also provides Cu(2+) or Zn(2+) for the ascorbate-mediated GPC1 deaminase degradation of its heparan sulfate side chains. The sequence is that of Major prion protein (PRNP) from Macaca fascicularis (Crab-eating macaque).